The primary structure comprises 850 residues: Penicillin-binding protein 1A (850 aa).

At 1–5 the chain is on the cytoplasmic side; it reads MKFVK. The helical; Signal-anchor for type II membrane protein transmembrane segment at 6–26 threads the bilayer; it reads YFLILAVCCILLGAGSIYGLY. Residues 27–850 are Periplasmic-facing; that stretch reads RYIEPQLPDV…IDNGEAQELF (824 aa). The interval 48–216 is transglycosylase; that stretch reads MQIYSADGEL…STFNPLYSMD (169 aa). Glutamate 86 functions as the Proton donor; for transglycosylase activity in the catalytic mechanism. The transpeptidase stretch occupies residues 400-710; the sequence is DVLQTGQQIW…GWRAGRDLQR (311 aa). Serine 465 serves as the catalytic Acyl-ester intermediate; for transpeptidase activity.

It in the N-terminal section; belongs to the glycosyltransferase 51 family. This sequence in the C-terminal section; belongs to the transpeptidase family.

The protein resides in the cell inner membrane. The enzyme catalyses [GlcNAc-(1-&gt;4)-Mur2Ac(oyl-L-Ala-gamma-D-Glu-L-Lys-D-Ala-D-Ala)](n)-di-trans,octa-cis-undecaprenyl diphosphate + beta-D-GlcNAc-(1-&gt;4)-Mur2Ac(oyl-L-Ala-gamma-D-Glu-L-Lys-D-Ala-D-Ala)-di-trans,octa-cis-undecaprenyl diphosphate = [GlcNAc-(1-&gt;4)-Mur2Ac(oyl-L-Ala-gamma-D-Glu-L-Lys-D-Ala-D-Ala)](n+1)-di-trans,octa-cis-undecaprenyl diphosphate + di-trans,octa-cis-undecaprenyl diphosphate + H(+). It carries out the reaction Preferential cleavage: (Ac)2-L-Lys-D-Ala-|-D-Ala. Also transpeptidation of peptidyl-alanyl moieties that are N-acyl substituents of D-alanine.. The protein operates within cell wall biogenesis; peptidoglycan biosynthesis. Its function is as follows. Cell wall formation. Synthesis of cross-linked peptidoglycan from the lipid intermediates. The enzyme has a penicillin-insensitive transglycosylase N-terminal domain (formation of linear glycan strands) and a penicillin-sensitive transpeptidase C-terminal domain (cross-linking of the peptide subunits). The sequence is that of Penicillin-binding protein 1A (mrcA) from Escherichia coli (strain K12).